The sequence spans 566 residues: Proline--tRNA ligase (566 aa).

This sequence belongs to the class-II aminoacyl-tRNA synthetase family. ProS type 1 subfamily. Homodimer.

It localises to the cytoplasm. The enzyme catalyses tRNA(Pro) + L-proline + ATP = L-prolyl-tRNA(Pro) + AMP + diphosphate. Functionally, catalyzes the attachment of proline to tRNA(Pro) in a two-step reaction: proline is first activated by ATP to form Pro-AMP and then transferred to the acceptor end of tRNA(Pro). As ProRS can inadvertently accommodate and process non-cognate amino acids such as alanine and cysteine, to avoid such errors it has two additional distinct editing activities against alanine. One activity is designated as 'pretransfer' editing and involves the tRNA(Pro)-independent hydrolysis of activated Ala-AMP. The other activity is designated 'posttransfer' editing and involves deacylation of mischarged Ala-tRNA(Pro). The misacylated Cys-tRNA(Pro) is not edited by ProRS. This chain is Proline--tRNA ligase, found in Bacillus cereus (strain B4264).